We begin with the raw amino-acid sequence, 422 residues long: Serine--tRNA ligase (422 aa).

Residue 229–231 (TAE) coordinates L-serine. Position 260 to 262 (260 to 262 (RRE)) interacts with ATP. L-serine is bound at residue glutamate 283. 347 to 350 (EISS) contacts ATP. Serine 383 provides a ligand contact to L-serine.

The protein belongs to the class-II aminoacyl-tRNA synthetase family. Type-1 seryl-tRNA synthetase subfamily. As to quaternary structure, homodimer. The tRNA molecule binds across the dimer.

The protein localises to the cytoplasm. It catalyses the reaction tRNA(Ser) + L-serine + ATP = L-seryl-tRNA(Ser) + AMP + diphosphate + H(+). The catalysed reaction is tRNA(Sec) + L-serine + ATP = L-seryl-tRNA(Sec) + AMP + diphosphate + H(+). Its pathway is aminoacyl-tRNA biosynthesis; selenocysteinyl-tRNA(Sec) biosynthesis; L-seryl-tRNA(Sec) from L-serine and tRNA(Sec): step 1/1. In terms of biological role, catalyzes the attachment of serine to tRNA(Ser). Is also able to aminoacylate tRNA(Sec) with serine, to form the misacylated tRNA L-seryl-tRNA(Sec), which will be further converted into selenocysteinyl-tRNA(Sec). The chain is Serine--tRNA ligase from Pelobacter propionicus (strain DSM 2379 / NBRC 103807 / OttBd1).